Here is a 237-residue protein sequence, read N- to C-terminus: LexA repressor (237 aa).

The H-T-H motif DNA-binding region spans 26 to 46 (FDEMKDALDLRSKSGIHRLIT). Active-site for autocatalytic cleavage activity residues include Ser-158 and Lys-196.

Belongs to the peptidase S24 family. In terms of assembly, homodimer.

It catalyses the reaction Hydrolysis of Ala-|-Gly bond in repressor LexA.. Represses a number of genes involved in the response to DNA damage (SOS response), including recA and lexA. In the presence of single-stranded DNA, RecA interacts with LexA causing an autocatalytic cleavage which disrupts the DNA-binding part of LexA, leading to derepression of the SOS regulon and eventually DNA repair. The polypeptide is LexA repressor (Rhodopseudomonas palustris (strain BisA53)).